We begin with the raw amino-acid sequence, 59 residues long: Large ribosomal subunit protein uL30 (59 aa).

The protein belongs to the universal ribosomal protein uL30 family. Part of the 50S ribosomal subunit.

The polypeptide is Large ribosomal subunit protein uL30 (Photobacterium profundum (strain SS9)).